The sequence spans 194 residues: MSTRNPQRKRRGGAVNSRQTQKRTRETTSTPEISLEAEPIELVETVGDEIVDLTCESLEPVVVDLTHNDSVVIVEERRRPRRNGRRLRQDHADSCVVSSDDEELSKDKDVYVTTHTPRSTKDEGTTGLRPSGTVSCPICMDGYSEIVQNGRLIVSTECGHVFCSQCLRDSLKNANTCPTCRKKINHKRYHPIYI.

The span at 1-12 (MSTRNPQRKRRG) shows a compositional bias: basic residues. A required for ubiquitination activity region spans residues 1-20 (MSTRNPQRKRRGGAVNSRQT). The tract at residues 1–36 (MSTRNPQRKRRGGAVNSRQTQKRTRETTSTPEISLE) is disordered. The mediates interaction with TRPS1 stretch occupies residues 6 to 65 (PQRKRRGGAVNSRQTQKRTRETTSTPEISLEAEPIELVETVGDEIVDLTCESLEPVVVDL). 4 short sequence motifs (SUMO interaction motif) span residues 40-43 (IELV), 50-53 (IVDL), 61-63 (VVV), and 71-74 (VVIV). Residues Ser-98 and Ser-99 each carry the phosphoserine modification. Cys-136, Cys-139, Cys-158, His-160, Cys-163, Cys-166, Cys-177, and Cys-180 together coordinate Zn(2+). Residues 136 to 181 (CPICMDGYSEIVQNGRLIVSTECGHVFCSQCLRDSLKNANTCPTCR) form an RING-type zinc finger.

As to quaternary structure, homodimer (via RING-type zinc finger domain). Interacts with GSC2. Interacts with AR/the androgen receptor and TBP. Interacts with TCF20. Interacts with PATZ1. Interacts with TRPS1; negatively regulates TRPS1 transcriptional repressor activity. Interacts with PML (isoform PML-1, isoform PML-2, isoform PML-3, isoform PML-4, isoform PML-5 and isoform PML-6). Interacts with PRDM1/Blimp-1. In terms of processing, sumoylated; conjugated by one or two SUMO1 moieties. Post-translationally, autoubiquitinated. In terms of tissue distribution, widely expressed with highest levels in testis.

It is found in the cytoplasm. It localises to the nucleus. Its subcellular location is the nucleoplasm. The protein resides in the PML body. The enzyme catalyses S-ubiquitinyl-[E2 ubiquitin-conjugating enzyme]-L-cysteine + [acceptor protein]-L-lysine = [E2 ubiquitin-conjugating enzyme]-L-cysteine + N(6)-ubiquitinyl-[acceptor protein]-L-lysine.. It participates in protein modification; protein ubiquitination. Its function is as follows. E3 ubiquitin-protein ligase which binds polysumoylated chains covalently attached to proteins and mediates 'Lys-6'-, 'Lys-11'-, 'Lys-48'- and 'Lys-63'-linked polyubiquitination of those substrates and their subsequent targeting to the proteasome for degradation. Regulates the degradation of several proteins including PML and the transcriptional activator PEA3. Involved in chromosome alignment and spindle assembly, it regulates the kinetochore CENPH-CENPI-CENPK complex by targeting polysumoylated CENPI to proteasomal degradation. Regulates the cellular responses to hypoxia and heat shock through degradation of respectively EPAS1 and PARP1. Alternatively, it may also bind DNA/nucleosomes and have a more direct role in the regulation of transcription for instance enhancing basal transcription and steroid receptor-mediated transcriptional activation. Catalyzes ubiquitination of sumoylated PARP1 in response to PARP1 trapping to chromatin, leading to PARP1 removal from chromatin by VCP/p97. This is E3 ubiquitin-protein ligase RNF4 from Rattus norvegicus (Rat).